The chain runs to 37 residues: Large ribosomal subunit protein bL36c (37 aa).

It belongs to the bacterial ribosomal protein bL36 family.

The protein localises to the plastid. It is found in the chloroplast. This is Large ribosomal subunit protein bL36c from Cycas taitungensis (Prince sago).